A 136-amino-acid polypeptide reads, in one-letter code: MAKEFSRSQRVSQEMQKEIALILQREIKDPRVGMATVSGIELSRDLAYAKVFVTFLNVLTDNADPDTVKNGIKALQDASGYIRTLLGKAMRLRIVPELTFAYDNSLIEGMRMSNLVTNVIKNDVERQVNPGSDEEK.

The protein belongs to the RbfA family. In terms of assembly, monomer. Binds 30S ribosomal subunits, but not 50S ribosomal subunits or 70S ribosomes.

Its subcellular location is the cytoplasm. Functionally, one of several proteins that assist in the late maturation steps of the functional core of the 30S ribosomal subunit. Associates with free 30S ribosomal subunits (but not with 30S subunits that are part of 70S ribosomes or polysomes). Required for efficient processing of 16S rRNA. May interact with the 5'-terminal helix region of 16S rRNA. This is Ribosome-binding factor A from Yersinia enterocolitica serotype O:8 / biotype 1B (strain NCTC 13174 / 8081).